Reading from the N-terminus, the 234-residue chain is t-SNARE protein aex-4 (234 aa).

T-SNARE coiled-coil homology domains lie at 37–99 and 170–232; these read AKLN…ITAM and DAIE…VKKL.

This sequence belongs to the SNAP-25 family. In terms of tissue distribution, expressed in intestinal cells.

It is found in the cell membrane. Its function is as follows. t-SNARE protein which regulates the secretion of aex-5 from intestinal cells. Involved in the defecation motor program, which is a coordinated series of three muscle contractions that occurs every 45 seconds. The chain is t-SNARE protein aex-4 from Caenorhabditis elegans.